Here is a 547-residue protein sequence, read N- to C-terminus: Chaperonin GroEL (547 aa).

ATP is bound by residues 30–33 (TLGP), K51, 87–91 (DGTTT), G415, 479–481 (NAA), and D495.

Belongs to the chaperonin (HSP60) family. As to quaternary structure, forms a cylinder of 14 subunits composed of two heptameric rings stacked back-to-back. Interacts with the co-chaperonin GroES.

It is found in the cytoplasm. It catalyses the reaction ATP + H2O + a folded polypeptide = ADP + phosphate + an unfolded polypeptide.. In terms of biological role, together with its co-chaperonin GroES, plays an essential role in assisting protein folding. The GroEL-GroES system forms a nano-cage that allows encapsulation of the non-native substrate proteins and provides a physical environment optimized to promote and accelerate protein folding. The sequence is that of Chaperonin GroEL from Pseudomonas paraeruginosa (strain DSM 24068 / PA7) (Pseudomonas aeruginosa (strain PA7)).